We begin with the raw amino-acid sequence, 109 residues long: UPF0060 membrane protein RC1_3291 (109 aa).

Transmembrane regions (helical) follow at residues 4-24 (IATYLLAAVAEIGGCFAFWAW), 31-51 (PLWLIPGMASLALFAWALTRI), 59-79 (AYAAYGGIYILTSLVWMWLVE), and 88-108 (TLGTVLCVSGALVIIFGPRGG).

Belongs to the UPF0060 family.

Its subcellular location is the cell inner membrane. The protein is UPF0060 membrane protein RC1_3291 of Rhodospirillum centenum (strain ATCC 51521 / SW).